The chain runs to 170 residues: NADH-ubiquinone oxidoreductase chain 2 (170 aa).

4 helical membrane-spanning segments follow: residues 24–44 (LLWM…IMMF), 67–87 (FLIF…GFLP), 101–121 (LFIL…YLRL), and 150–170 (LILN…YMIL).

Belongs to the complex I subunit 2 family.

It localises to the mitochondrion inner membrane. It carries out the reaction a ubiquinone + NADH + 5 H(+)(in) = a ubiquinol + NAD(+) + 4 H(+)(out). Its function is as follows. Core subunit of the mitochondrial membrane respiratory chain NADH dehydrogenase (Complex I) that is believed to belong to the minimal assembly required for catalysis. Complex I functions in the transfer of electrons from NADH to the respiratory chain. The immediate electron acceptor for the enzyme is believed to be ubiquinone. In Anopheles albimanus (New world malaria mosquito), this protein is NADH-ubiquinone oxidoreductase chain 2 (ND2).